Reading from the N-terminus, the 140-residue chain is Large ribosomal subunit protein uL16 (140 aa).

Belongs to the universal ribosomal protein uL16 family. Part of the 50S ribosomal subunit.

Binds 23S rRNA and is also seen to make contacts with the A and possibly P site tRNAs. The protein is Large ribosomal subunit protein uL16 of Phytoplasma australiense.